A 364-amino-acid polypeptide reads, in one-letter code: Long-wave-sensitive opsin 1 (364 aa).

At 1 to 52 (MAHTWGPQRLAGGQPQANFEESTQGSIFTYTNSNSTRDPFEGPNYHIAPRWV) the chain is on the extracellular side. The O-linked (GlcNAc) serine glycan is linked to Ser-22. Asn-34 carries N-linked (GlcNAc...) asparagine glycosylation. Residues 53–77 (YHLTSAWMVFVVIASVFTNGLVLAA) traverse the membrane as a helical segment. Topologically, residues 78 to 89 (TMRFKKLRHPLN) are cytoplasmic. The helical transmembrane segment at 90–115 (WILVNLAIADLAETIIASTISVVNQM) threads the bilayer. Over 116 to 129 (YGYFVLGHPLCVVE) the chain is Extracellular. A disulfide bond links Cys-126 and Cys-203. Residues 130–149 (GYTVSLCGITGLWSLAIISW) form a helical membrane-spanning segment. Over 150–168 (ERWMVVCKPFGNVRFDAKL) the chain is Cytoplasmic. The helical transmembrane segment at 169 to 192 (ATAGIAFSWIWAAVWTAPPIFGWS) threads the bilayer. At 193 to 218 (RYWPHGLKTSCGPDVFSGSSYPGVQS) the chain is on the extracellular side. A helical transmembrane segment spans residues 219–246 (YMIVLMITCCFIPLSVIILCYLQVWLAI). At 247-268 (RAVAKQQKESESTQKAEKEVTR) the chain is on the cytoplasmic side. A helical membrane pass occupies residues 269–292 (MVMVMIFAYCLCWGPYTFFACFAA). Residues 293–300 (AHPGYAFH) are Extracellular-facing. The chain crosses the membrane as a helical span at residues 301 to 325 (PLVAALPAYFAKSATIYNPIIYVFM). Lys-312 is modified (N6-(retinylidene)lysine). Residues 326 to 364 (NRQFRNCILQLFGKKVDDSSELSSVSKTEASSVSSVSPA) are Cytoplasmic-facing.

The protein belongs to the G-protein coupled receptor 1 family. Opsin subfamily. In terms of processing, phosphorylated on some or all of the serine and threonine residues present in the C-terminal region. The three color pigments are found in the cone photoreceptor cells.

The protein localises to the membrane. Functionally, visual pigments are the light-absorbing molecules that mediate vision. They consist of an apoprotein, opsin, covalently linked to cis-retinal. In Capra hircus (Goat), this protein is Long-wave-sensitive opsin 1 (OPN1LW).